Consider the following 262-residue polypeptide: MPAELSPIDTAKFAAARRAVDLVQDGMKLGLGTGSTAAWMVRCLAERVREEGLRVQGVPTSTRTAELARALGIQVVTLDEAKWLDLTIDGADEFDADFNLIKGGGAALLQEKIVATASDRMVVIADAAKEVAHLGAFPLPVEVIPFGWQSTKMLIEETLEGMDVLGREVTLRLSGDAPLLTDEKNYILDLHLKRIGEPRQLGLALNQIAGVVENGLFIDICDTVVVGHGDGRVSLRDLQSGQAEEGCIDMDRARNIFADLGD.

Substrate-binding positions include 33–36 (TGST), 89–92 (DGAD), and 102–105 (KGGG). The Proton acceptor role is filled by Glu111. Substrate is bound at residue Lys129.

Belongs to the ribose 5-phosphate isomerase family. Homodimer.

The catalysed reaction is aldehydo-D-ribose 5-phosphate = D-ribulose 5-phosphate. It functions in the pathway carbohydrate degradation; pentose phosphate pathway; D-ribose 5-phosphate from D-ribulose 5-phosphate (non-oxidative stage): step 1/1. In terms of biological role, catalyzes the reversible conversion of ribose-5-phosphate to ribulose 5-phosphate. The protein is Ribose-5-phosphate isomerase A of Cereibacter sphaeroides (strain ATCC 17029 / ATH 2.4.9) (Rhodobacter sphaeroides).